A 636-amino-acid chain; its full sequence is MRGGRGAPFWLWPLPKLALLPLLWVLFQRTRPQGSAGPLQCYGVGPLGDLNCSWEPLGDLGAPSELHLQSQKYRSNKTQTVAVAAGRSWVAIPREQLTMSDKLLVWGTKAGQPLWPPVFVNLETQMKPNAPRLGPDVDFSEDDPLEATVHWAPPTWPSHKVLICQFHYRRCQEAAWTLLEPELKTIPLTPVEIQDLELATGYKVYGRCRMEKEEDLWGEWSPILSFQTPPSAPKDVWVSGNLCGTPGGEEPLLLWKAPGPCVQVSYKVWFWVGGRELSPEGITCCCSLIPSGAEWARVSAVNATSWEPLTNLSLVCLDSASAPRSVAVSSIAGSTELLVTWQPGPGEPLEHVVDWARDGDPLEKLNWVRLPPGNLSALLPGNFTVGVPYRITVTAVSASGLASASSVWGFREELAPLVGPTLWRLQDAPPGTPAIAWGEVPRHQLRGHLTHYTLCAQSGTSPSVCMNVSGNTQSVTLPDLPWGPCELWVTASTIAGQGPPGPILRLHLPDNTLRWKVLPGILFLWGLFLLGCGLSLATSGRCYHLRHKVLPRWVWEKVPDPANSSSGQPHMEQVPEAQPLGDLPILEVEEMEPPPVMESSQPAQATAPLDSGYEKHFLPTPEELGLLGPPRPQVLA.

The first 32 residues, Met1–Pro32, serve as a signal peptide directing secretion. The Extracellular segment spans residues Gln33–Lys516. N-linked (GlcNAc...) asparagine glycosylation is found at Asn51 and Asn76. The Fibronectin type-III 1 domain occupies Pro131–Ser231. The short motif at Trp217 to Ser221 is the WSXWS motif element. Residues Asn302, Asn311, Asn374, Asn382, and Asn467 are each glycosylated (N-linked (GlcNAc...) asparagine). Fibronectin type-III domains lie at Ala322–Leu417 and Gly419–Asn511. The helical transmembrane segment at Val517–Ala537 threads the bilayer. Over Thr538–Ala636 the chain is Cytoplasmic. The short motif at Val554–Ala562 is the Box 1 motif element. A disordered region spans residues Glu587 to Ala636. Positions Leu618–Gly628 are enriched in low complexity.

Belongs to the type I cytokine receptor family. Type 2 subfamily. As to quaternary structure, component of a receptor complex composed of IL6ST/GP130, IL27RA/WSX1 and CNTFR which interacts with the neuroprotective peptide humanin. As to expression, highly expressed in lymphoid tissues such as spleen, lymph nodes and peripheral blood leukocytes. Weakly expressed in other tissues examined including heart, brain, fetal and adult lung, liver, skeletal muscle, kidney, pancreas, prostate, testis, ovary, small intestine, kidney and colon. In the lymphoid system, higher level expression in CD4+ T-cell subsets than in CD8+ T-cell subsets. Also weaker expression in CD19+ B-cells and monocytes.

The protein resides in the membrane. Functionally, receptor for IL27. Requires IL6ST/GP130 to mediate signal transduction in response to IL27. This signaling system acts through STAT3 and STAT1. Acts as a receptor for the neuroprotective peptide humanin as part of a complex with IL6ST/GP130 and CNTFR. Involved in the regulation of Th1-type immune responses. Also appears to be involved in innate defense mechanisms. This Homo sapiens (Human) protein is Interleukin-27 receptor subunit alpha (IL27RA).